The sequence spans 954 residues: Glycine dehydrogenase (decarboxylating) (954 aa).

Position 704 is an N6-(pyridoxal phosphate)lysine (Lys704).

Belongs to the GcvP family. The glycine cleavage system is composed of four proteins: P, T, L and H. Requires pyridoxal 5'-phosphate as cofactor.

It catalyses the reaction N(6)-[(R)-lipoyl]-L-lysyl-[glycine-cleavage complex H protein] + glycine + H(+) = N(6)-[(R)-S(8)-aminomethyldihydrolipoyl]-L-lysyl-[glycine-cleavage complex H protein] + CO2. Its function is as follows. The glycine cleavage system catalyzes the degradation of glycine. The P protein binds the alpha-amino group of glycine through its pyridoxal phosphate cofactor; CO(2) is released and the remaining methylamine moiety is then transferred to the lipoamide cofactor of the H protein. The sequence is that of Glycine dehydrogenase (decarboxylating) from Agrobacterium fabrum (strain C58 / ATCC 33970) (Agrobacterium tumefaciens (strain C58)).